A 131-amino-acid polypeptide reads, in one-letter code: Small ribosomal subunit protein uS11 (131 aa).

This sequence belongs to the universal ribosomal protein uS11 family. As to quaternary structure, part of the 30S ribosomal subunit. Interacts with proteins S7 and S18. Binds to IF-3.

In terms of biological role, located on the platform of the 30S subunit, it bridges several disparate RNA helices of the 16S rRNA. Forms part of the Shine-Dalgarno cleft in the 70S ribosome. This Saccharophagus degradans (strain 2-40 / ATCC 43961 / DSM 17024) protein is Small ribosomal subunit protein uS11.